The chain runs to 419 residues: MLSARTMKEVVYWSPKKVADWLLENAMPEYCEPLEHFTGQDLINLTQEDFKKPPLYRVSSDNGQRLLDMIETLKMEHHMEAHKNGHANGHLSIGVDIPNPDGSFSIKTKPNGMPNGFRKEMIKIPMPEPERSQYPMEWGKTFLAFLYALSCFVLTTVMISVVHERVPPKEVQPPLPDTFFDHFNRVQWAFSICEINGMILVGLWLFQWLLLKYKSIISRRFFCIVGTLYLYRCITMYVTTLPVPGMHFNCSPKLFGDWEAQVRRIMKLIAGGGLSITGSHNMCGDYLYSGHTVMLTLTYLFIKEYSPRRLWWYHWICWLLSVVGIFCILLAHDHYTVDVVVAYYITTRLFWWYHTMANQQVLKEASQMNLLARVWWYRPFQYFEKNVQGIVPRSYHWPFPWPVVHLSRQVKYSRLVNDT.

The region spanning 13–76 (WSPKKVADWL…LDMIETLKME (64 aa)) is the SAM domain. S14 bears the Phosphoserine mark. Helical transmembrane passes span 142-162 (FLAF…ISVV), 190-210 (FSIC…QWLL), 221-241 (FFCI…VTTL), 282-302 (MCGD…YLFI), and 310-330 (LWWY…CILL). The active site involves H291. Residues 331–419 (AHDHYTVDVV…VKYSRLVNDT (89 aa)) lie on the Cytoplasmic side of the membrane. Active-site residues include H334 and D338.

Belongs to the sphingomyelin synthase family. Isoform 1 is widely expressed, isoform 2 shows a more narrow distribution and isoform 3 is detected only in testis and heart.

It localises to the golgi apparatus membrane. The catalysed reaction is an N-acylsphing-4-enine + a 1,2-diacyl-sn-glycero-3-phosphocholine = a sphingomyelin + a 1,2-diacyl-sn-glycerol. The enzyme catalyses 1-(9Z-octadecenoyl)-2-acyl-sn-3-glycerol + a sphingomyelin = a 1-(9Z-octadecenoyl)-2-acyl-sn-glycero-3-phosphocholine + an N-acylsphing-4-enine. It catalyses the reaction N-hexadecanoylsphinganine + a 1,2-diacyl-sn-glycero-3-phosphocholine = N-hexadecanoyl-sphinganine-1-phosphocholine + a 1,2-diacyl-sn-glycerol. It carries out the reaction N-hexadecanoyl-(4R)-hydroxysphinganine + a 1,2-diacyl-sn-glycero-3-phosphocholine = N-hexadecanoyl-(4R)-hydroxysphinganine-phosphocholine + a 1,2-diacyl-sn-glycerol. The catalysed reaction is an N-acylsphing-4-enine + a 1,2-diacyl-sn-glycero-3-phosphoethanolamine = an N-acylsphing-4-enine 1-phosphoethanolamine + a 1,2-diacyl-sn-glycerol. The protein operates within sphingolipid metabolism. Functionally, major sphingomyelin synthase at the Golgi apparatus. Catalyzes the reversible transfer of phosphocholine moiety in sphingomyelin biosynthesis: in the forward reaction transfers phosphocholine head group of phosphatidylcholine (PC) on to ceramide (CER) to form ceramide phosphocholine (sphingomyelin, SM) and diacylglycerol (DAG) as by-product, and in the reverse reaction transfers phosphocholine from SM to DAG to form PC and CER. The direction of the reaction depends on the levels of CER and DAG in Golgi membranes. Converts the newly synthesized CER, that is transported from the endoplasmic reticulum to the trans-Golgi by the Cer transport protein (CERT), to SM. Can form a heteromeric complex with glucosylceramide synthase (GCS) increasing SMS activity and reducing glucosylceramide synthesis, a critical mechanism that controls the metabolic fate of CER in the Golgi. Does not use free phosphorylcholine or CDP-choline as donor. Can also transfer phosphoethanolamine head group of phosphatidylethanolamine (PE) on to CER to form ceramide phosphoethanolamine (CPE). Regulates receptor-mediated signal transduction via mitogenic DAG and proapoptotic CER, as well as via SM, a structural component of membrane rafts that serve as platforms for signal transduction and protein sorting. Plays a role in secretory transport via regulation of DAG pool at the Golgi apparatus and its downstream effects on PRKD1. (Microbial infection) Contributes to the brain SM production for Japanese encephalitis virus attachment and infection. The chain is Phosphatidylcholine:ceramide cholinephosphotransferase 1 (Sgms1) from Mus musculus (Mouse).